A 29-amino-acid chain; its full sequence is Cytochrome b6-f complex subunit 8 (29 aa).

Residues 3–23 (IVSLAWAVLMVVFTFSLSLVV) form a helical membrane-spanning segment.

Belongs to the PetN family. In terms of assembly, the 4 large subunits of the cytochrome b6-f complex are cytochrome b6, subunit IV (17 kDa polypeptide, PetD), cytochrome f and the Rieske protein, while the 4 small subunits are PetG, PetL, PetM and PetN. The complex functions as a dimer.

The protein localises to the plastid. It localises to the chloroplast thylakoid membrane. Functionally, component of the cytochrome b6-f complex, which mediates electron transfer between photosystem II (PSII) and photosystem I (PSI), cyclic electron flow around PSI, and state transitions. This Drimys granadensis protein is Cytochrome b6-f complex subunit 8.